A 549-amino-acid polypeptide reads, in one-letter code: Cytoplasmic trehalase (549 aa).

Substrate is bound by residues R168, 175-176 (WD), N212, 221-223 (RSQ), 292-294 (RDE), and G324. Residues D326 and E509 each act as proton donor/acceptor in the active site. E525 lines the substrate pocket.

It belongs to the glycosyl hydrolase 37 family. As to quaternary structure, monomer.

It is found in the cytoplasm. It carries out the reaction alpha,alpha-trehalose + H2O = alpha-D-glucose + beta-D-glucose. It functions in the pathway glycan degradation; trehalose degradation; D-glucose from alpha,alpha-trehalose: step 1/1. Its function is as follows. Hydrolyzes trehalose to glucose. Could be involved, in cells returning to low osmolarity conditions, in the utilization of the accumulated cytoplasmic trehalose, which was synthesized in response to high osmolarity. The sequence is that of Cytoplasmic trehalase from Escherichia fergusonii (strain ATCC 35469 / DSM 13698 / CCUG 18766 / IAM 14443 / JCM 21226 / LMG 7866 / NBRC 102419 / NCTC 12128 / CDC 0568-73).